A 494-amino-acid polypeptide reads, in one-letter code: MGTTKVTTPLIFAISIATIGSFQFGYNTGVINAPEAIIKDFLNYTLEERSETPPSSVLLTSLWSLSVAIFSVGGMIGSFSVGLFVNRFGRRNSMLIVNLLAIAGGCLMGFCKIAESVEMLILGRLIIGLFCGLCTGFVPMYIGEISPTALRGAFGTLNQLGIVIGILVAQIFGLKVILGTEDLWPLLLGFTILPAIIQCAALPFCPESPRFLLINRKEEEKAKEILQRLWGTEDVAQDIQEMKDESMRMSQEKQVTVLELFRAPNYRQPIIISIMLQLSQQLSGINAVFYYSTGIFKDAGVQEPVYATIGAGVVNTIFTVVSVFLVERAGRRTLHLIGLGGMAFCSILMTISLLLKDNYSWMSFICIGAILVFVAFFEIGPGPIPWFIVAELFGQGPRPAAMAVAGCSNWTSNFLVGLLFPSATFYLGAYVFIVFTVFLVIFWVFTFFKVPETRGRTFEEITRAFEGQVQTGTRGEKGPIMEMNSIQPTKDTNA.

Topologically, residues 1-10 (MGTTKVTTPL) are cytoplasmic. Residues 11–32 (IFAISIATIGSFQFGYNTGVIN) traverse the membrane as a helical segment. Topologically, residues 33 to 64 (APEAIIKDFLNYTLEERSETPPSSVLLTSLWS) are extracellular. A glycan (N-linked (GlcNAc...) asparagine) is linked at Asn43. The chain crosses the membrane as a helical span at residues 65–85 (LSVAIFSVGGMIGSFSVGLFV). The Cytoplasmic portion of the chain corresponds to 86 to 90 (NRFGR). Residues 91 to 111 (RNSMLIVNLLAIAGGCLMGFC) form a helical membrane-spanning segment. Topologically, residues 112–118 (KIAESVE) are extracellular. A helical transmembrane segment spans residues 119–142 (MLILGRLIIGLFCGLCTGFVPMYI). Topologically, residues 143-153 (GEISPTALRGA) are cytoplasmic. The chain crosses the membrane as a helical span at residues 154-174 (FGTLNQLGIVIGILVAQIFGL). D-glucose is bound at residue Gln159. The Extracellular portion of the chain corresponds to 175 to 183 (KVILGTEDL). The helical transmembrane segment at 184–204 (WPLLLGFTILPAIIQCAALPF) threads the bilayer. Residues 205 to 269 (CPESPRFLLI…LFRAPNYRQP (65 aa)) are Cytoplasmic-facing. Phosphothreonine is present on Thr232. The helical transmembrane segment at 270 to 290 (IIISIMLQLSQQLSGINAVFY) threads the bilayer. The important for selectivity against fructose stretch occupies residues 277–279 (QLS). D-glucose contacts are provided by residues 280–281 (QQ) and Asn286. The Extracellular portion of the chain corresponds to 291-304 (YSTGIFKDAGVQEP). Residues 305 to 325 (VYATIGAGVVNTIFTVVSVFL) traverse the membrane as a helical segment. Asn315 contacts D-glucose. The Cytoplasmic portion of the chain corresponds to 326-331 (VERAGR). A helical membrane pass occupies residues 332–352 (RTLHLIGLGGMAFCSILMTIS). Residues 353-363 (LLLKDNYSWMS) lie on the Extracellular side of the membrane. A helical membrane pass occupies residues 364-389 (FICIGAILVFVAFFEIGPGPIPWFIV). Glu378 and Trp386 together coordinate D-glucose. Over 390 to 399 (AELFGQGPRP) the chain is Cytoplasmic. Residues 400–420 (AAMAVAGCSNWTSNFLVGLLF) form a helical membrane-spanning segment. At 421–429 (PSATFYLGA) the chain is on the extracellular side. Residues 430–450 (YVFIVFTVFLVIFWVFTFFKV) traverse the membrane as a helical segment. Residues 451–494 (PETRGRTFEEITRAFEGQVQTGTRGEKGPIMEMNSIQPTKDTNA) are Cytoplasmic-facing. Residues 473 to 494 (TRGEKGPIMEMNSIQPTKDTNA) form a disordered region. The span at 484–494 (NSIQPTKDTNA) shows a compositional bias: polar residues. At Ser485 the chain carries Phosphoserine. Thr492 is modified (phosphothreonine).

It belongs to the major facilitator superfamily. Sugar transporter (TC 2.A.1.1) family. Glucose transporter subfamily. In terms of assembly, interacts with SMIM43; the interaction may promote SLC2A3-mediated glucose transport to meet the energy needs of mesendoderm differentiation. In terms of tissue distribution, detected in placenta.

Its subcellular location is the cell membrane. The protein resides in the perikaryon. It is found in the cell projection. It catalyses the reaction D-glucose(out) = D-glucose(in). The catalysed reaction is D-galactose(in) = D-galactose(out). With respect to regulation, deoxyglucose transport is inhibited by D-glucose, D-galactose and maltose. Galactose transport is inhibited by D-glucose and maltose. Functionally, facilitative glucose transporter. Can also mediate the uptake of various other monosaccharides across the cell membrane. Mediates the uptake of glucose, 2-deoxyglucose, galactose, mannose, xylose and fucose, and probably also dehydroascorbate. Does not mediate fructose transport. Required for mesendoderm differentiation. This Ovis aries (Sheep) protein is Solute carrier family 2, facilitated glucose transporter member 3.